Here is a 215-residue protein sequence, read N- to C-terminus: Pyridoxine/pyridoxamine 5'-phosphate oxidase (215 aa).

Residues 9 to 12 (RRDY) and lysine 69 contribute to the substrate site. FMN contacts are provided by residues 64 to 69 (RILLLK), 79 to 80 (FT), lysine 86, and glutamine 108. Tyrosine 126, arginine 130, and serine 134 together coordinate substrate. FMN contacts are provided by residues 143–144 (QS) and tryptophan 188. 194–196 (RLH) contributes to the substrate binding site. Residue arginine 198 coordinates FMN.

It belongs to the pyridoxamine 5'-phosphate oxidase family. Homodimer. FMN is required as a cofactor.

The catalysed reaction is pyridoxamine 5'-phosphate + O2 + H2O = pyridoxal 5'-phosphate + H2O2 + NH4(+). It catalyses the reaction pyridoxine 5'-phosphate + O2 = pyridoxal 5'-phosphate + H2O2. Its pathway is cofactor metabolism; pyridoxal 5'-phosphate salvage; pyridoxal 5'-phosphate from pyridoxamine 5'-phosphate: step 1/1. It functions in the pathway cofactor metabolism; pyridoxal 5'-phosphate salvage; pyridoxal 5'-phosphate from pyridoxine 5'-phosphate: step 1/1. In terms of biological role, catalyzes the oxidation of either pyridoxine 5'-phosphate (PNP) or pyridoxamine 5'-phosphate (PMP) into pyridoxal 5'-phosphate (PLP). This is Pyridoxine/pyridoxamine 5'-phosphate oxidase from Pseudomonas fluorescens (strain SBW25).